The chain runs to 541 residues: Chaperonin GroEL (541 aa).

Residues 29-32, 86-90, glycine 413, 476-478, and aspartate 492 contribute to the ATP site; these read TLGP, DGTTT, and NAA. The disordered stretch occupies residues 521–541; the sequence is KPEENAPAAPAAPNPGMGGMM. Positions 525–535 are enriched in low complexity; sequence NAPAAPAAPNP.

This sequence belongs to the chaperonin (HSP60) family. As to quaternary structure, forms a cylinder of 14 subunits composed of two heptameric rings stacked back-to-back. Interacts with the co-chaperonin GroES.

Its subcellular location is the cytoplasm. It catalyses the reaction ATP + H2O + a folded polypeptide = ADP + phosphate + an unfolded polypeptide.. In terms of biological role, together with its co-chaperonin GroES, plays an essential role in assisting protein folding. The GroEL-GroES system forms a nano-cage that allows encapsulation of the non-native substrate proteins and provides a physical environment optimized to promote and accelerate protein folding. The chain is Chaperonin GroEL from Lactiplantibacillus plantarum (strain ATCC BAA-793 / NCIMB 8826 / WCFS1) (Lactobacillus plantarum).